We begin with the raw amino-acid sequence, 212 residues long: Imidazole glycerol phosphate synthase subunit HisH (212 aa).

One can recognise a Glutamine amidotransferase type-1 domain in the interval 3–212 (TVAVIDYGMG…QNFAAWDGRW (210 aa)). Cys-81 functions as the Nucleophile in the catalytic mechanism. Residues His-190 and Glu-192 contribute to the active site.

In terms of assembly, heterodimer of HisH and HisF.

It localises to the cytoplasm. It carries out the reaction 5-[(5-phospho-1-deoxy-D-ribulos-1-ylimino)methylamino]-1-(5-phospho-beta-D-ribosyl)imidazole-4-carboxamide + L-glutamine = D-erythro-1-(imidazol-4-yl)glycerol 3-phosphate + 5-amino-1-(5-phospho-beta-D-ribosyl)imidazole-4-carboxamide + L-glutamate + H(+). It catalyses the reaction L-glutamine + H2O = L-glutamate + NH4(+). It functions in the pathway amino-acid biosynthesis; L-histidine biosynthesis; L-histidine from 5-phospho-alpha-D-ribose 1-diphosphate: step 5/9. In terms of biological role, IGPS catalyzes the conversion of PRFAR and glutamine to IGP, AICAR and glutamate. The HisH subunit catalyzes the hydrolysis of glutamine to glutamate and ammonia as part of the synthesis of IGP and AICAR. The resulting ammonia molecule is channeled to the active site of HisF. This is Imidazole glycerol phosphate synthase subunit HisH from Pseudomonas savastanoi pv. phaseolicola (strain 1448A / Race 6) (Pseudomonas syringae pv. phaseolicola (strain 1448A / Race 6)).